Here is a 259-residue protein sequence, read N- to C-terminus: tRNA pseudouridine synthase A (259 aa).

Asp52 functions as the Nucleophile in the catalytic mechanism. Substrate is bound at residue Tyr110.

Belongs to the tRNA pseudouridine synthase TruA family. In terms of assembly, homodimer.

The catalysed reaction is uridine(38/39/40) in tRNA = pseudouridine(38/39/40) in tRNA. Functionally, formation of pseudouridine at positions 38, 39 and 40 in the anticodon stem and loop of transfer RNAs. The chain is tRNA pseudouridine synthase A from Coprothermobacter proteolyticus (strain ATCC 35245 / DSM 5265 / OCM 4 / BT).